A 209-amino-acid polypeptide reads, in one-letter code: V-type ATP synthase subunit D (209 aa).

The protein belongs to the V-ATPase D subunit family.

Produces ATP from ADP in the presence of a proton gradient across the membrane. This is V-type ATP synthase subunit D from Anaeromyxobacter sp. (strain K).